A 464-amino-acid polypeptide reads, in one-letter code: Cysteine--tRNA ligase (464 aa).

C28 contacts Zn(2+). A 'HIGH' region motif is present at residues 30–40 (PTVYDHSHIGH). Residues C205, H230, and E234 each contribute to the Zn(2+) site. The short motif at 263–267 (KMSKS) is the 'KMSKS' region element. K266 provides a ligand contact to ATP.

The protein belongs to the class-I aminoacyl-tRNA synthetase family. The cofactor is Zn(2+).

The protein localises to the cytoplasm. It catalyses the reaction tRNA(Cys) + L-cysteine + ATP = L-cysteinyl-tRNA(Cys) + AMP + diphosphate. In Ignicoccus hospitalis (strain KIN4/I / DSM 18386 / JCM 14125), this protein is Cysteine--tRNA ligase.